A 246-amino-acid polypeptide reads, in one-letter code: tRNA pseudouridine synthase C (246 aa).

The active site involves Asp-58.

It belongs to the pseudouridine synthase RluA family.

It carries out the reaction uridine(65) in tRNA = pseudouridine(65) in tRNA. Responsible for synthesis of pseudouridine from uracil-65 in transfer RNAs. This is tRNA pseudouridine synthase C (truC) from Vibrio parahaemolyticus serotype O3:K6 (strain RIMD 2210633).